A 163-amino-acid polypeptide reads, in one-letter code: uncharacterized protein (163 aa).

It belongs to the mimivirus L242/L243 family.

This is an uncharacterized protein from Acanthamoeba polyphaga (Amoeba).